A 155-amino-acid chain; its full sequence is Transcriptional regulator MraZ (155 aa).

SpoVT-AbrB domains follow at residues 5–52 (TYEN…SQDR) and 81–124 (SMNL…EPAA).

Belongs to the MraZ family. As to quaternary structure, forms oligomers.

The protein resides in the cytoplasm. It is found in the nucleoid. This Pelagibacter ubique (strain HTCC1062) protein is Transcriptional regulator MraZ.